A 621-amino-acid chain; its full sequence is Chaperone protein HtpG (621 aa).

The segment at 1-341 (MSNQEYTFQT…SEDLPLNVSR (341 aa)) is a; substrate-binding. The b stretch occupies residues 342–547 (EILQQNKILA…GDEQNAMMAN (206 aa)). Residues 548 to 621 (FMRQMGQSVP…RLNSVLLKAL (74 aa)) are c.

Belongs to the heat shock protein 90 family. As to quaternary structure, homodimer.

It is found in the cytoplasm. Functionally, molecular chaperone. Has ATPase activity. This chain is Chaperone protein HtpG, found in Helicobacter pylori (strain HPAG1).